Reading from the N-terminus, the 296-residue chain is ATP synthase gamma chain (296 aa).

Belongs to the ATPase gamma chain family. As to quaternary structure, F-type ATPases have 2 components, CF(1) - the catalytic core - and CF(0) - the membrane proton channel. CF(1) has five subunits: alpha(3), beta(3), gamma(1), delta(1), epsilon(1). CF(0) has three main subunits: a, b and c.

It localises to the cell inner membrane. Its function is as follows. Produces ATP from ADP in the presence of a proton gradient across the membrane. The gamma chain is believed to be important in regulating ATPase activity and the flow of protons through the CF(0) complex. The polypeptide is ATP synthase gamma chain (Rhodopirellula baltica (strain DSM 10527 / NCIMB 13988 / SH1)).